The sequence spans 493 residues: Glycerol kinase (493 aa).

Residue threonine 11 participates in ADP binding. Positions 11, 12, and 13 each coordinate ATP. A sn-glycerol 3-phosphate-binding site is contributed by threonine 11. Residue arginine 15 coordinates ADP. Arginine 80, glutamate 81, tyrosine 132, and aspartate 241 together coordinate sn-glycerol 3-phosphate. Glycerol contacts are provided by arginine 80, glutamate 81, tyrosine 132, aspartate 241, and glutamine 242. 2 residues coordinate ADP: threonine 263 and glycine 306. ATP-binding residues include threonine 263, glycine 306, glutamine 310, and glycine 408. Glycine 408 contacts ADP.

It belongs to the FGGY kinase family.

The enzyme catalyses glycerol + ATP = sn-glycerol 3-phosphate + ADP + H(+). It functions in the pathway polyol metabolism; glycerol degradation via glycerol kinase pathway; sn-glycerol 3-phosphate from glycerol: step 1/1. With respect to regulation, inhibited by fructose 1,6-bisphosphate (FBP). In terms of biological role, key enzyme in the regulation of glycerol uptake and metabolism. Catalyzes the phosphorylation of glycerol to yield sn-glycerol 3-phosphate. This chain is Glycerol kinase, found in Cereibacter sphaeroides (strain KD131 / KCTC 12085) (Rhodobacter sphaeroides).